The sequence spans 162 residues: MSEQAPAPKRGRRFKEQTPVQRALGLLVRREHSKKELNRKLQARGIEPEAAQAAVERLAGEGWQDDVRFAASVVRNRASSGYGPLHIRAELGTHGLDSDAVSAAMATFEGDWTENALDLIRRRFGEDGPVDLAQRRKAADLLARRGFDGNSIRLATRFDLED.

The protein belongs to the RecX family.

It localises to the cytoplasm. Its function is as follows. Modulates RecA activity. The protein is Regulatory protein RecX of Xanthomonas campestris pv. campestris (strain 8004).